Consider the following 493-residue polypeptide: Malonyl-CoA decarboxylase, mitochondrial (493 aa).

A mitochondrion-targeting transit peptide spans 1–39 (MRGFGPGLTARRLLPLRLPPRPPGPRLASGQAAGALERA). The segment at 40 to 190 (MDELLRRAVP…VLKGMLSEWF (151 aa)) is alpha-helical domain. Lysine 59 carries the N6-acetyllysine modification. Lysine 168 carries the N6-acetyllysine; alternate modification. Lysine 168 bears the N6-succinyllysine; alternate mark. The segment at 191 to 493 (SSGFLNLERV…VAQFQKNSKL (303 aa)) is catalytic domain. N6-acetyllysine is present on lysine 211. Position 222 is an N6-succinyllysine (lysine 222). Residues 299–305 (QGVELGT) and serine 329 contribute to the malonyl-CoA site. Serine 329 acts as the Proton acceptor in catalysis. An N6-acetyllysine modification is found at lysine 389. A malonyl-CoA-binding site is contributed by histidine 423. The Proton donor role is filled by histidine 423. Residue lysine 472 is modified to N6-acetyllysine. A Microbody targeting signal motif is present at residues 491–493 (SKL).

In terms of assembly, homotetramer. Dimer of dimers. The two subunits within a dimer display conformational differences suggesting that at any given moment, only one of the two subunits is competent for malonyl-CoA binding and catalytic activity. Under oxidizing conditions, can form disulfide-linked homotetramers (in vitro). Associates with the peroxisomal targeting signal receptor PEX5. Post-translationally, acetylation at Lys-472 activates malonyl-CoA decarboxylase activity. Deacetylation at Lys-472 by SIRT4 represses activity, leading to promote lipogenesis. In terms of processing, interchain disulfide bonds may form in peroxisomes (Potential). Interchain disulfide bonds are not expected to form in the reducing environment of the cytoplasm and mitochondria. Expressed in fibroblasts and hepatoblastoma cells (at protein level). Expressed strongly in heart, liver, skeletal muscle, kidney and pancreas. Expressed in myotubes. Expressed weakly in brain, placenta, spleen, thymus, testis, ovary and small intestine.

The protein localises to the cytoplasm. The protein resides in the mitochondrion matrix. Its subcellular location is the peroxisome. It is found in the peroxisome matrix. It catalyses the reaction malonyl-CoA + H(+) = acetyl-CoA + CO2. Its pathway is metabolic intermediate biosynthesis; acetyl-CoA biosynthesis; acetyl-CoA from malonyl-CoA: step 1/1. With respect to regulation, malonyl-CoA decarboxylase activity does not require any cofactors or divalent metal ions. Formation of interchain disulfide bonds leads to positive cooperativity between active sites and increases the affinity for malonyl-CoA and the catalytic efficiency (in vitro). In terms of biological role, catalyzes the conversion of malonyl-CoA to acetyl-CoA. In the fatty acid biosynthesis MCD selectively removes malonyl-CoA and thus assures that methyl-malonyl-CoA is the only chain elongating substrate for fatty acid synthase and that fatty acids with multiple methyl side chains are produced. In peroxisomes it may be involved in degrading intraperoxisomal malonyl-CoA, which is generated by the peroxisomal beta-oxidation of odd chain-length dicarboxylic fatty acids. Plays a role in the metabolic balance between glucose and lipid oxidation in muscle independent of alterations in insulin signaling. May play a role in controlling the extent of ischemic injury by promoting glucose oxidation. The protein is Malonyl-CoA decarboxylase, mitochondrial of Homo sapiens (Human).